The following is a 427-amino-acid chain: Serine protease inhibitor 88Ea (427 aa).

Residues 1 to 18 form the signal peptide; the sequence is MHILSISLMAVLPAIALA. N-linked (GlcNAc...) asparagine glycosylation is present at Asn-224.

Belongs to the serpin family. As to expression, expressed in nurse cells and oocytes. Expressed in wings.

It is found in the secreted. Functionally, serine protease inhibitor with activity toward trypsin. Negatively regulates the Toll signaling pathway and suppresses the expression of the antifungal peptide drosomycin. Its negative regulation of the Toll signaling pathway also results in the inhibition of the melanization immune response via the phenoloxidase (PPO1) cascade. Essential for unfolding and expansion of the wings after emergence from the pupal case. May regulate the Toll pathway by blocking the proteolysis of the Toll ligand spz. The chain is Serine protease inhibitor 88Ea from Drosophila melanogaster (Fruit fly).